Reading from the N-terminus, the 357-residue chain is UDP-N-acetylglucosamine 2-epimerase homolog (357 aa).

It belongs to the UDP-N-acetylglucosamine 2-epimerase family.

The chain is UDP-N-acetylglucosamine 2-epimerase homolog from Methanococcus maripaludis (strain DSM 14266 / JCM 13030 / NBRC 101832 / S2 / LL).